A 285-amino-acid polypeptide reads, in one-letter code: Small ribosomal subunit protein uS2 (285 aa).

A disordered region spans residues 229 to 285 (AGLASGDAKPEAGAGEPLAEWEQELLAQANPNAEGSAEAAPAAATEEAPAAQTPADF). Over residues 257–285 (ANPNAEGSAEAAPAAATEEAPAAQTPADF) the composition is skewed to low complexity.

It belongs to the universal ribosomal protein uS2 family.

The polypeptide is Small ribosomal subunit protein uS2 (Nocardia farcinica (strain IFM 10152)).